The sequence spans 185 residues: Large ribosomal subunit protein uL30 (185 aa).

The protein belongs to the universal ribosomal protein uL30 family. Part of the 50S ribosomal subunit.

This is Large ribosomal subunit protein uL30 from Caldivirga maquilingensis (strain ATCC 700844 / DSM 13496 / JCM 10307 / IC-167).